The following is a 257-amino-acid chain: Hydroxyacylglutathione hydrolase (257 aa).

The Zn(2+) site is built by His-54, His-56, Asp-58, His-59, His-109, Asp-129, and His-167.

It belongs to the metallo-beta-lactamase superfamily. Glyoxalase II family. As to quaternary structure, monomer. The cofactor is Zn(2+).

It carries out the reaction an S-(2-hydroxyacyl)glutathione + H2O = a 2-hydroxy carboxylate + glutathione + H(+). It functions in the pathway secondary metabolite metabolism; methylglyoxal degradation; (R)-lactate from methylglyoxal: step 2/2. In terms of biological role, thiolesterase that catalyzes the hydrolysis of S-D-lactoyl-glutathione to form glutathione and D-lactic acid. In Marinomonas sp. (strain MWYL1), this protein is Hydroxyacylglutathione hydrolase.